Reading from the N-terminus, the 447-residue chain is Tol-Pal system protein TolB (447 aa).

Residues 1 to 34 (MSSRLPALPLSRRQALLGGAGSAAALLLPGGAQA) form the signal peptide. The tract at residues 426–447 (RNEQKVPTPGFASDPAWSPLLS) is disordered.

This sequence belongs to the TolB family. The Tol-Pal system is composed of five core proteins: the inner membrane proteins TolA, TolQ and TolR, the periplasmic protein TolB and the outer membrane protein Pal. They form a network linking the inner and outer membranes and the peptidoglycan layer.

Its subcellular location is the periplasm. Its function is as follows. Part of the Tol-Pal system, which plays a role in outer membrane invagination during cell division and is important for maintaining outer membrane integrity. The protein is Tol-Pal system protein TolB of Rhodopseudomonas palustris (strain BisB18).